Here is a 366-residue protein sequence, read N- to C-terminus: Peptide chain release factor 2 (366 aa).

Gln251 carries the N5-methylglutamine modification.

Belongs to the prokaryotic/mitochondrial release factor family. Methylated by PrmC. Methylation increases the termination efficiency of RF2.

The protein resides in the cytoplasm. Peptide chain release factor 2 directs the termination of translation in response to the peptide chain termination codons UGA and UAA. The protein is Peptide chain release factor 2 of Campylobacter concisus (strain 13826).